A 456-amino-acid polypeptide reads, in one-letter code: Frizzled/smoothened-like sans CRD protein F (456 aa).

Residues 1–30 (MIFNNLKNQNKIINFLIIFYFLSFLKQIES) form the signal peptide. Residues 31–92 (QSINITSSSS…PFFTINEWNK (62 aa)) lie on the Extracellular side of the membrane. Asparagine 34, asparagine 52, and asparagine 70 each carry an N-linked (GlcNAc...) asparagine glycan. Residues 93-113 (FLNMSLVMGTISFFSGLFLLV) form a helical membrane-spanning segment. Over 114–127 (TYSPIVNKTHNRHT) the chain is Cytoplasmic. A helical membrane pass occupies residues 128-148 (IGVMCMSFGVCLAMCSDMWNF). Over 149–174 (GSNFTEKSICPSPGQYLSTSNARCLS) the chain is Extracellular. An N-linked (GlcNAc...) asparagine glycan is attached at asparagine 151. Residues 175-195 (SGIFLQFGGVFGFLNWTLLSF) form a helical membrane-spanning segment. Residues 196–211 (DLFMNIKGIITKNYDK) lie on the Cytoplasmic side of the membrane. The chain crosses the membrane as a helical span at residues 212–232 (YYVSGTFIIAIIFTFVPIVND). Topologically, residues 233–252 (QYSMSYIGLGCWLGSAMYQL) are extracellular. The helical transmembrane segment at 253–273 (IFFWILLSICLIVSSVFIILI) threads the bilayer. Topologically, residues 274–297 (LKEVYIIIKLSKQKTSLKGNIRPL) are cytoplasmic. The chain crosses the membrane as a helical span at residues 298–318 (ICISITGFAFFYMFFYYISIV). The Extracellular segment spans residues 319 to 354 (VEGDYYERVLNEYTDCLMDPTKDISECKSPRMSVAS). A helical transmembrane segment spans residues 355-375 (EFVFLLCLRLLGIGAFIFYGI). At 376–456 (NNKVKKIWLN…ESSLNSVDEI (81 aa)) the chain is on the cytoplasmic side. Positions 403–422 (ADNDKSNSNGSKVLYRTNNT) are disordered.

This sequence belongs to the G-protein coupled receptor Fz/Smo family.

The protein resides in the membrane. This Dictyostelium discoideum (Social amoeba) protein is Frizzled/smoothened-like sans CRD protein F (fscF).